The chain runs to 680 residues: DNA-directed RNA polymerase subunit beta' (680 aa).

The Zn(2+) site is built by cysteine 69, cysteine 71, cysteine 87, and cysteine 90. Residues aspartate 489, aspartate 491, and aspartate 493 each contribute to the Mg(2+) site.

It belongs to the RNA polymerase beta' chain family. RpoC1 subfamily. In terms of assembly, in plastids the minimal PEP RNA polymerase catalytic core is composed of four subunits: alpha, beta, beta', and beta''. When a (nuclear-encoded) sigma factor is associated with the core the holoenzyme is formed, which can initiate transcription. Mg(2+) is required as a cofactor. Zn(2+) serves as cofactor.

It is found in the plastid. It localises to the chloroplast. It catalyses the reaction RNA(n) + a ribonucleoside 5'-triphosphate = RNA(n+1) + diphosphate. DNA-dependent RNA polymerase catalyzes the transcription of DNA into RNA using the four ribonucleoside triphosphates as substrates. This is DNA-directed RNA polymerase subunit beta' from Cucumis sativus (Cucumber).